The sequence spans 1320 residues: Immunoglobulin superfamily member 1 (1320 aa).

The first 18 residues, 1 to 18 (MMLRTFTLLLLCIWLNRG), serve as a signal peptide directing secretion. The Extracellular segment spans residues 19 to 504 (MTSMAAVESQ…LPWNSILNEA (486 aa)). Ig-like C2-type domains are found at residues 29-113 (PELW…KILE), 115-212 (EAPG…KLVV), 224-308 (HPGP…IWVT), 312-399 (PKTW…ATYN), and 401-482 (VELI…HRSE). The N-linked (GlcNAc...) asparagine glycan is linked to N44. Cysteines 49 and 97 form a disulfide. N-linked (GlcNAc...) asparagine glycosylation is found at N329, N365, and N372. 2 disulfide bridges follow: C334/C383 and C423/C466. A helical membrane pass occupies residues 505 to 525 (IRVSLTVQFLSLLLLVLWLQW). The Cytoplasmic segment spans residues 526-534 (KCRRLRLRE). A helical membrane pass occupies residues 535 to 555 (AWLLGTAQGVAMLVILIALLC). Residues 556 to 1320 (CGLCNGALTE…GVSVEQTVPI (765 aa)) are Extracellular-facing. Ig-like C2-type domains are found at residues 572–665 (PTPK…VGTD), 662–756 (VGTD…ELVI), 761–853 (PKPF…LIVT), 857–942 (PKPT…YLST), 949–1044 (TDTF…ELIV), 1049–1134 (PKPS…NHSN), and 1145–1226 (PKPS…EPSD). N-linked (GlcNAc...) asparagine glycosylation is found at N591, N731, N782, N830, N874, N923, N970, N1011, and N1066. The cysteines at positions 783 and 833 are disulfide-linked. A disulfide bridge links C879 with C926. The cysteines at positions 1071 and 1118 are disulfide-linked. Residues N1131 and N1207 are each glycosylated (N-linked (GlcNAc...) asparagine). C1167 and C1210 are oxidised to a cystine.

Interacts with INHA; the interaction is not confirmed by standard receptor binding assays. Interacts with ACVR1B; the interaction appears to be ligand-dependent as it is diminished by inhibin B and activin A. Interacts with ACVR2A, ACVR2B, ACVRL1 and BMPR1B. Interacts with HECTD1. In terms of tissue distribution, expressed in pituitary gland, testis and liver. Isoform 2 is expressed pituitary gland and testis.

It localises to the membrane. It is found in the secreted. Functionally, seems to be a coreceptor in inhibin signaling, but seems not to be a high-affinity inhibin receptor. Antagonizes activin A signaling in the presence or absence of inhibin B. Necessary to mediate a specific antagonistic effect of inhibin B on activin-stimulated transcription. This Rattus norvegicus (Rat) protein is Immunoglobulin superfamily member 1 (Igsf1).